A 411-amino-acid chain; its full sequence is Multifunctional CCA protein (411 aa).

Residues Gly8 and Arg11 each contribute to the ATP site. Residues Gly8 and Arg11 each coordinate CTP. Mg(2+)-binding residues include Asp21 and Asp23. ATP is bound by residues Arg91, Arg137, and Arg140. Positions 91, 137, and 140 each coordinate CTP. The HD domain occupies 226–327; the sequence is TGVHVMLVID…LRFLQETDAL (102 aa).

Belongs to the tRNA nucleotidyltransferase/poly(A) polymerase family. Bacterial CCA-adding enzyme type 1 subfamily. In terms of assembly, monomer. Can also form homodimers and oligomers. Mg(2+) serves as cofactor. Requires Ni(2+) as cofactor.

It catalyses the reaction a tRNA precursor + 2 CTP + ATP = a tRNA with a 3' CCA end + 3 diphosphate. The enzyme catalyses a tRNA with a 3' CCA end + 2 CTP + ATP = a tRNA with a 3' CCACCA end + 3 diphosphate. Catalyzes the addition and repair of the essential 3'-terminal CCA sequence in tRNAs without using a nucleic acid template. Adds these three nucleotides in the order of C, C, and A to the tRNA nucleotide-73, using CTP and ATP as substrates and producing inorganic pyrophosphate. tRNA 3'-terminal CCA addition is required both for tRNA processing and repair. Also involved in tRNA surveillance by mediating tandem CCA addition to generate a CCACCA at the 3' terminus of unstable tRNAs. While stable tRNAs receive only 3'-terminal CCA, unstable tRNAs are marked with CCACCA and rapidly degraded. In Methylobacillus flagellatus (strain ATCC 51484 / DSM 6875 / VKM B-1610 / KT), this protein is Multifunctional CCA protein.